We begin with the raw amino-acid sequence, 375 residues long: G-protein coupled estrogen receptor 1 (375 aa).

M1 is subject to N-acetylmethionine. Over 1 to 62 the chain is Extracellular; it reads MDVTSQARGV…QQYVIGLFLS (62 aa). 3 N-linked (GlcNAc...) asparagine glycosylation sites follow: N25, N32, and N44. A helical membrane pass occupies residues 63–84; that stretch reads CLYTIFLFPIGFVGNILILVVN. The Cytoplasmic portion of the chain corresponds to 85–96; the sequence is ISFREKMTIPDL. The helical transmembrane segment at 97-120 threads the bilayer; sequence YFINLAVADLILVADSLIEVFNLH. Residues 121–132 are Extracellular-facing; sequence ERYYDIAVLCTF. C130 and C207 are oxidised to a cystine. The chain crosses the membrane as a helical span at residues 133–153; the sequence is MSLFLQVNMYSSVFFLTWMSF. The Cytoplasmic segment spans residues 154 to 175; the sequence is DRYIALARAMRCSLFRTKHHAR. A helical transmembrane segment spans residues 176–194; that stretch reads LSCGLIWMASVSATLVPFT. Over 195-220 the chain is Extracellular; that stretch reads AVHLQHTDEACFCFADVREVQWLEVT. Residues 221 to 236 form a helical membrane-spanning segment; that stretch reads LGFIVPFAIIGLCYSL. The Cytoplasmic portion of the chain corresponds to 237–259; it reads IVRVLVRAHRHRGLRPRRQKALR. A helical membrane pass occupies residues 260-280; it reads MILAVVLVFFVCWLPENVFIS. Over 281-306 the chain is Extracellular; it reads VHLLQRTQPGAAPCKQSFRHAHPLTG. Residues 307–327 traverse the membrane as a helical segment; it reads HIVNLAAFSNSCLNPLIYSFL. Over 328–375 the chain is Cytoplasmic; that stretch reads GETFRDKLRLYIEQKTNLPALNRFCHAALKAVIPDSTEQSDVRFSSAV.

It belongs to the G-protein coupled receptor 1 family. As to quaternary structure, homodimer. Heterodimer; heterodimerizes with other G-protein-coupled receptor (GPCRs) like CRHR1, HTR1A and PAQR8. Interacts (via C-terminus tail motif) with DLG4 (via N-terminus tandem pair of PDZ domains); the interaction is direct and induces the increase of GPER1 protein levels residing at the plasma membrane surface in a estradiol-independent manner. Interacts with RAMP3; the interaction confers proper subcellular localization and function in cardioprotection. Interacts with KRT7 and KRT8. Interacts with EGFR; the interaction increases after agonist-induced stimulation in cancer-associated fibroblasts (CAF). Interacts with EGFR and ESR1. In terms of processing, ubiquitinated; ubiquitination occurs at the plasma membrane and leads to proteasome-mediated degradation. Post-translationally, glycosylated. In terms of tissue distribution, expressed in placenta, endothelial and epithelial cells, non laboring and laboring term myometrium, fibroblasts and cancer-associated fibroblasts (CAF), prostate cancer cells and invasive adenocarcinoma (at protein level). Ubiquitously expressed, but is most abundant in placenta. In brain regions, expressed as a 2.8 kb transcript in basal forebrain, frontal cortex, thalamus, hippocampus, caudate and putamen.

The protein resides in the nucleus. It localises to the cytoplasm. The protein localises to the perinuclear region. It is found in the cytoskeleton. Its subcellular location is the cell membrane. The protein resides in the basolateral cell membrane. It localises to the cytoplasmic vesicle membrane. The protein localises to the early endosome. It is found in the recycling endosome. Its subcellular location is the golgi apparatus membrane. The protein resides in the golgi apparatus. It localises to the trans-Golgi network. The protein localises to the endoplasmic reticulum membrane. It is found in the cell projection. Its subcellular location is the dendrite. The protein resides in the dendritic spine membrane. It localises to the axon. The protein localises to the postsynaptic density. It is found in the mitochondrion membrane. In terms of biological role, G-protein coupled estrogen receptor that binds to 17-beta-estradiol (E2) with high affinity, leading to rapid and transient activation of numerous intracellular signaling pathways. Stimulates cAMP production, calcium mobilization and tyrosine kinase Src inducing the release of heparin-bound epidermal growth factor (HB-EGF) and subsequent transactivation of the epidermal growth factor receptor (EGFR), activating downstream signaling pathways such as PI3K/Akt and ERK/MAPK. Mediates pleiotropic functions among others in the cardiovascular, endocrine, reproductive, immune and central nervous systems. Has a role in cardioprotection by reducing cardiac hypertrophy and perivascular fibrosis in a RAMP3-dependent manner. Regulates arterial blood pressure by stimulating vasodilation and reducing vascular smooth muscle and microvascular endothelial cell proliferation. Plays a role in blood glucose homeostasis contributing to the insulin secretion response by pancreatic beta cells. Triggers mitochondrial apoptosis during pachytene spermatocyte differentiation. Stimulates uterine epithelial cell proliferation. Enhances uterine contractility in response to oxytocin. Contributes to thymic atrophy by inducing apoptosis. Attenuates TNF-mediated endothelial expression of leukocyte adhesion molecules. Promotes neuritogenesis in developing hippocampal neurons. Plays a role in acute neuroprotection against NMDA-induced excitotoxic neuronal death. Increases firing activity and intracellular calcium oscillations in luteinizing hormone-releasing hormone (LHRH) neurons. Inhibits early osteoblast proliferation at growth plate during skeletal development. Inhibits mature adipocyte differentiation and lipid accumulation. Involved in the recruitment of beta-arrestin 2 ARRB2 at the plasma membrane in epithelial cells. Also functions as a receptor for aldosterone mediating rapid regulation of vascular contractibility through the PI3K/ERK signaling pathway. Involved in cancer progression regulation. Stimulates cancer-associated fibroblast (CAF) proliferation by a rapid genomic response through the EGFR/ERK transduction pathway. Associated with EGFR, may act as a transcription factor activating growth regulatory genes (c-fos, cyclin D1). Promotes integrin alpha-5/beta-1 and fibronectin (FN) matrix assembly in breast cancer cells. This chain is G-protein coupled estrogen receptor 1, found in Homo sapiens (Human).